The primary structure comprises 357 residues: Dual-specificity RNA methyltransferase RlmN (357 aa).

Glutamate 89 (proton acceptor) is an active-site residue. The 232-residue stretch at 109-340 (EGEKYTVCVS…CTIRESKALD (232 aa)) folds into the Radical SAM core domain. A disulfide bridge links cysteine 116 with cysteine 345. Positions 123, 127, and 130 each coordinate [4Fe-4S] cluster. S-adenosyl-L-methionine is bound by residues 173 to 174 (GE), serine 203, 226 to 228 (SLH), and asparagine 302. Catalysis depends on cysteine 345, which acts as the S-methylcysteine intermediate.

It belongs to the radical SAM superfamily. RlmN family. Requires [4Fe-4S] cluster as cofactor.

The protein localises to the cytoplasm. The enzyme catalyses adenosine(2503) in 23S rRNA + 2 reduced [2Fe-2S]-[ferredoxin] + 2 S-adenosyl-L-methionine = 2-methyladenosine(2503) in 23S rRNA + 5'-deoxyadenosine + L-methionine + 2 oxidized [2Fe-2S]-[ferredoxin] + S-adenosyl-L-homocysteine. It carries out the reaction adenosine(37) in tRNA + 2 reduced [2Fe-2S]-[ferredoxin] + 2 S-adenosyl-L-methionine = 2-methyladenosine(37) in tRNA + 5'-deoxyadenosine + L-methionine + 2 oxidized [2Fe-2S]-[ferredoxin] + S-adenosyl-L-homocysteine. In terms of biological role, specifically methylates position 2 of adenine 2503 in 23S rRNA and position 2 of adenine 37 in tRNAs. m2A2503 modification seems to play a crucial role in the proofreading step occurring at the peptidyl transferase center and thus would serve to optimize ribosomal fidelity. The polypeptide is Dual-specificity RNA methyltransferase RlmN (Helicobacter pylori (strain P12)).